The sequence spans 247 residues: Probable 2-phosphosulfolactate phosphatase (247 aa).

Belongs to the ComB family. The cofactor is Mg(2+).

The enzyme catalyses (2R)-O-phospho-3-sulfolactate + H2O = (2R)-3-sulfolactate + phosphate. The protein is Probable 2-phosphosulfolactate phosphatase of Clostridium perfringens (strain 13 / Type A).